The sequence spans 194 residues: Dephospho-CoA kinase (194 aa).

The region spanning 4-194 (ALGLTGSIGM…HLVSKLTEGT (191 aa)) is the DPCK domain. 12 to 17 (GMGKST) lines the ATP pocket.

This sequence belongs to the CoaE family.

It is found in the cytoplasm. The catalysed reaction is 3'-dephospho-CoA + ATP = ADP + CoA + H(+). Its pathway is cofactor biosynthesis; coenzyme A biosynthesis; CoA from (R)-pantothenate: step 5/5. Functionally, catalyzes the phosphorylation of the 3'-hydroxyl group of dephosphocoenzyme A to form coenzyme A. This chain is Dephospho-CoA kinase, found in Jannaschia sp. (strain CCS1).